The following is a 215-amino-acid chain: Probable phosphoglycerate mutase GpmB (215 aa).

Substrate-binding positions include 8 to 15 (RHGETQWN), 21 to 22 (QG), R58, R60, 82 to 85 (ELNM), 104 to 105 (RR), and 151 to 152 (GI). Catalysis depends on H9, which acts as the Tele-phosphohistidine intermediate. E82 serves as the catalytic Proton donor/acceptor.

This sequence belongs to the phosphoglycerate mutase family. GpmB subfamily.

The catalysed reaction is (2R)-2-phosphoglycerate = (2R)-3-phosphoglycerate. It participates in carbohydrate degradation; glycolysis; pyruvate from D-glyceraldehyde 3-phosphate: step 3/5. The chain is Probable phosphoglycerate mutase GpmB from Shigella boydii serotype 18 (strain CDC 3083-94 / BS512).